Reading from the N-terminus, the 394-residue chain is Argininosuccinate synthase (394 aa).

Position 8-16 (8-16 (AYSGGLDTS)) interacts with ATP. L-citrulline is bound by residues tyrosine 86 and serine 91. Glycine 116 contributes to the ATP binding site. Positions 118, 122, and 123 each coordinate L-aspartate. Position 122 (asparagine 122) interacts with L-citrulline. 5 residues coordinate L-citrulline: arginine 126, serine 172, serine 181, glutamate 257, and tyrosine 269.

The protein belongs to the argininosuccinate synthase family. Type 1 subfamily. Homotetramer.

The protein resides in the cytoplasm. The catalysed reaction is L-citrulline + L-aspartate + ATP = 2-(N(omega)-L-arginino)succinate + AMP + diphosphate + H(+). It functions in the pathway amino-acid biosynthesis; L-arginine biosynthesis; L-arginine from L-ornithine and carbamoyl phosphate: step 2/3. The chain is Argininosuccinate synthase from Methanosarcina acetivorans (strain ATCC 35395 / DSM 2834 / JCM 12185 / C2A).